We begin with the raw amino-acid sequence, 300 residues long: 11-beta-hydroxysteroid dehydrogenase 1 (300 aa).

The Cytoplasmic segment spans residues 1 to 7 (MAFLKKY). The helical; Signal-anchor for type II membrane protein transmembrane segment at 8 to 24 (LLTILMVFLAYYYYSAN) threads the bilayer. Over 25 to 300 (EKFRPEMLQG…SNEKLYGRWA (276 aa)) the chain is Lumenal. NADP(+) is bound by residues 41–67 (GASKGIGREIAYHLAKMGAHVVVTARS), 92–93 (SM), and 119–123 (NHVLY). A substrate-binding site is contributed by serine 170. Tyrosine 183 acts as the Proton acceptor in catalysis. NADP(+) is bound at residue 183–187 (YSASK). Asparagine 207 carries N-linked (GlcNAc...) asparagine glycosylation. 218 to 222 (IDTET) is an NADP(+) binding site.

Belongs to the short-chain dehydrogenases/reductases (SDR) family. In terms of assembly, homodimer. As to expression, widely expressed in all peripheral tissues, with highest expression in liver, followed by kidney and lung, and very low expression in heart, lung, spleen, stomach, small intestine, colon, skin, skeletal muscle, and ovary.

It is found in the endoplasmic reticulum membrane. It catalyses the reaction an 11beta-hydroxysteroid + NADP(+) = an 11-oxosteroid + NADPH + H(+). The catalysed reaction is cortisone + NADPH + H(+) = cortisol + NADP(+). The enzyme catalyses corticosterone + NADP(+) = 11-dehydrocorticosterone + NADPH + H(+). It carries out the reaction a 7beta-hydroxysteroid + NADP(+) = a 7-oxosteroid + NADPH + H(+). It catalyses the reaction 7-oxocholesterol + NADPH + H(+) = 7beta-hydroxycholesterol + NADP(+). The catalysed reaction is chenodeoxycholate + NADP(+) = 7-oxolithocholate + NADPH + H(+). The enzyme catalyses 7-oxolithocholate + NADPH + H(+) = ursodeoxycholate + NADP(+). It carries out the reaction glycochenodeoxycholate + NADP(+) = 7-oxoglycolithocholate + NADPH + H(+). It catalyses the reaction taurochenodeoxycholate + NADP(+) = 7-oxotaurolithocholate + NADPH + H(+). The catalysed reaction is tauroursodeoxycholate + NADP(+) = 7-oxotaurolithocholate + NADPH + H(+). The enzyme catalyses glycoursodeoxycholate + NADP(+) = 7-oxoglycolithocholate + NADPH + H(+). It carries out the reaction 7-oxopregnenolone + NADPH + H(+) = 7beta-hydroxypregnenolone + NADP(+). It catalyses the reaction 3beta,7alpha-dihydroxyandrost-5-en-17-one + NADP(+) = 3beta-hydroxy-5-androstene-7,17-dione + NADPH + H(+). The catalysed reaction is 3beta-hydroxy-5-androstene-7,17-dione + NADPH + H(+) = 3beta,7beta-dihydroxyandrost-5-en-17-one + NADP(+). The enzyme catalyses 3beta-hydroxy-5alpha-androstane-7,17-dione + NADPH + H(+) = 3beta,7beta-dihydroxy-5alpha-androstan-17-one + NADP(+). Its function is as follows. Controls the reversible conversion of biologically active glucocorticoids such as cortisone to cortisol, and 11-dehydrocorticosterone to corticosterone in the presence of NADP(H). Participates in the corticosteroid receptor-mediated anti-inflammatory response, as well as metabolic and homeostatic processes. Bidirectional in vitro, predominantly functions as a reductase in vivo, thereby increasing the concentration of active glucocorticoids. It has broad substrate specificity, besides glucocorticoids, it accepts other steroid and sterol substrates. Interconverts 7-oxo- and 7-hydroxy-neurosteroids such as 7-oxopregnenolone and 7beta-hydroxypregnenolone, 7-oxodehydroepiandrosterone (3beta-hydroxy-5-androstene-7,17-dione) and 7beta-hydroxydehydroepiandrosterone (3beta,7beta-dihydroxyandrost-5-en-17-one), among others. Catalyzes the stereo-specific conversion of the major dietary oxysterol, 7-ketocholesterol (7-oxocholesterol), into the more polar 7-beta-hydroxycholesterol metabolite. 7-oxocholesterol is one of the most important oxysterols, it participates in several events such as induction of apoptosis, accumulation in atherosclerotic lesions, lipid peroxidation, and induction of foam cell formation. Mediates the 7-oxo reduction of 7-oxolithocholate mainly to chenodeoxycholate, and to a lesser extent to ursodeoxycholate, both in its free form and when conjugated to glycine or taurine, providing a link between glucocorticoid activation and bile acid metabolism. Catalyzes the synthesis of 7-beta-25-dihydroxycholesterol from 7-oxo-25-hydroxycholesterol in vitro, which acts as a ligand for the G-protein-coupled receptor (GPCR) Epstein-Barr virus-induced gene 2 (EBI2) and may thereby regulate immune cell migration. The polypeptide is 11-beta-hydroxysteroid dehydrogenase 1 (HSD11B1) (Cavia porcellus (Guinea pig)).